Consider the following 573-residue polypeptide: Zinc finger protein 10 (573 aa).

A KRAB domain is found at V14–P85. The C2H2-type 1; atypical zinc finger occupies D206 to H232. C2H2-type zinc fingers lie at residues Y265 to H287, Y293 to H315, Y321 to H343, Y349 to H371, Y377 to H399, Y405 to H427, F433 to H455, Y461 to H483, and Y489 to H511. The segment at Y517 to H539 adopts a C2H2-type 11; atypical zinc-finger fold.

It belongs to the krueppel C2H2-type zinc-finger protein family. In terms of assembly, interacts (via the KRAB domain) with TRIM28 (via the RBCC domain).

Its subcellular location is the nucleus. Functionally, may be involved in transcriptional regulation. The sequence is that of Zinc finger protein 10 (ZNF10) from Homo sapiens (Human).